We begin with the raw amino-acid sequence, 658 residues long: Probable rhamnogalacturonate lyase B (658 aa).

An N-terminal signal peptide occupies residues 1 to 19 (MRFAIPLGAACAWAGVALA). N-linked (GlcNAc...) asparagine glycosylation is found at N110, N143, N239, N280, N522, N530, N592, and N633.

It belongs to the polysaccharide lyase 4 family.

It is found in the secreted. The catalysed reaction is Endotype eliminative cleavage of L-alpha-rhamnopyranosyl-(1-&gt;4)-alpha-D-galactopyranosyluronic acid bonds of rhamnogalacturonan I domains in ramified hairy regions of pectin leaving L-rhamnopyranose at the reducing end and 4-deoxy-4,5-unsaturated D-galactopyranosyluronic acid at the non-reducing end.. Pectinolytic enzymes consist of four classes of enzymes: pectin lyase, polygalacturonase, pectin methylesterase and rhamnogalacturonase. Degrades the rhamnogalacturonan I (RG-I) backbone of pectin. The polypeptide is Probable rhamnogalacturonate lyase B (rglB) (Aspergillus fumigatus (strain CBS 144.89 / FGSC A1163 / CEA10) (Neosartorya fumigata)).